Here is a 915-residue protein sequence, read N- to C-terminus: MAASVEPRQPFGRLDAPATAPTARAPGSNGIRRRADSPVRGCGFPSLISPPRKGPVAEEEEDDDDEDDEGHEDWREAYGSHLQLEVEPSTRDPRDEGTADAWIERNPSLIRLTGKHPLNCEPPLARLMHHGFITPAPLHYVRNHGAVPRGDWATWTVEVTGLVRRPARLTMDELANGFPAAEVPATLVCAGNRRKEQNMVQQTVGFNWGAAGVSTSVWRGARLRDVLLRCGVMSKKGQALNVCFEGAEDLPGGGGSKYGTSVSREWAMDPSRDIILPYAQNGEPLLPDHGYPVRVLIPGCIGGRMVKWVRRIVVTTAESDNYYHFKDNRVLPSHVDAELANAEAWWYRPEYIINELNTNCVITTPGHDEILPINAFTTQRAYTIKGYAYSGGGKKITRVEVTLDGGESWMLCTLDIPEKPNKYGRYWCWCFWSVEIEVLDLLGAKEVAVRTWDQTHNTQPEKLIWNLMGMMNNCWFKIKVNVCRPHKGEIGLVFEHPTQPGNQTGGWMARQKHLETAEAAAPGLKRSTSTPFMNTAGDKQFTMSEVRKHGSKESAWIVVHGHVYDCTAFLKDHPGGADSILINAGSDCTEEFDAIHSDKAKALLDTYRIGELITTGTGYNSDNSVHGGSSLSHLAPIREATKVAGAPIALSSPREKVPCRLVDKKELSHDVRLFRFALPSSDQVLGLPVGKHIFVCATIDGKLCMRAYTPTSMVDEIGQFELLVKVYFRDEHPKFPNGGLMTQYLESLQVGSSYIDVKGPLGHVEYTGRGNFVINGKQRRARRLAMICGGSGITPMYQVIQAVLRDQPEDETEMHLVYANRSEDDILLRDELDRWAAEYPDRLKVWYVIDQVKRPEDGWKFSVGFVTEDILRAHVPEGGDDTLALACGPPPMIKFAISPNLEKMKYDMANSFISF.

The segment at 1–102 (MAASVEPRQP…PRDEGTADAW (102 aa)) is disordered. The segment covering 16–26 (APATAPTARAP) has biased composition (low complexity). Residues 57-71 (AEEEEDDDDEDDEGH) are compositionally biased toward acidic residues. The segment covering 88–97 (PSTRDPRDEG) has biased composition (basic and acidic residues). Cys189 lines the Mo-molybdopterin pocket. Residues 538-613 (DKQFTMSEVR…LDTYRIGELI (76 aa)) form the Cytochrome b5 heme-binding domain. Heme contacts are provided by His573 and His596. The FAD-binding FR-type domain occupies 654-767 (REKVPCRLVD…KGPLGHVEYT (114 aa)). FAD is bound by residues 706–709 (RAYT), 723–727 (LVKVY), Phe728, Phe735, 740–742 (LMT), Ser791, and Thr794.

This sequence belongs to the nitrate reductase family. In terms of assembly, homodimer. FAD is required as a cofactor. Heme serves as cofactor. It depends on Mo-molybdopterin as a cofactor.

It carries out the reaction nitrite + NAD(+) + H2O = nitrate + NADH + H(+). Its function is as follows. Nitrate reductase is a key enzyme involved in the first step of nitrate assimilation in plants, fungi and bacteria. This is Nitrate reductase [NADH] from Hordeum vulgare (Barley).